Reading from the N-terminus, the 136-residue chain is MAQVAIFKEIFDQVRKDLNCELFYSELKRHNVSHYIYYLATDNIHIVLENDNTVLIKGLKKVVNVKFSRNTHLIETSYDRLKSREITFQQYRENLAKAGVFRWITNIHEHKRYYYTFDNSLLFTESIQNTTQIFPR.

It to E.coli YcgX and YdfO.

This is an uncharacterized protein from Escherichia coli (strain K12).